Consider the following 254-residue polypeptide: Alcohol dehydrogenase 1 (254 aa).

Residue Phe10 to Leu33 coordinates NAD(+). Ser138 contacts substrate. Tyr151 functions as the Proton acceptor in the catalytic mechanism.

This sequence belongs to the short-chain dehydrogenases/reductases (SDR) family. Homodimer.

The enzyme catalyses a primary alcohol + NAD(+) = an aldehyde + NADH + H(+). The catalysed reaction is a secondary alcohol + NAD(+) = a ketone + NADH + H(+). The sequence is that of Alcohol dehydrogenase 1 (Adh1) from Drosophila montana (Fruit fly).